The following is a 293-amino-acid chain: Ribonuclease HIII (293 aa).

The RNase H type-2 domain occupies 78–293; the sequence is LPLIGTDEVG…TEKAKKRLER (216 aa). A divalent metal cation contacts are provided by Asp-84, Glu-85, and Asp-187.

This sequence belongs to the RNase HII family. RnhC subfamily. Mn(2+) serves as cofactor. It depends on Mg(2+) as a cofactor.

The protein resides in the cytoplasm. The catalysed reaction is Endonucleolytic cleavage to 5'-phosphomonoester.. Functionally, endonuclease that specifically degrades the RNA of RNA-DNA hybrids. In Streptococcus pneumoniae (strain Taiwan19F-14), this protein is Ribonuclease HIII.